The primary structure comprises 506 residues: Phenylacetaldehyde synthase (506 aa).

L-phenylalanine contacts are provided by proline 101, histidine 202, and histidine 317. At lysine 318 the chain carries N6-(pyridoxal phosphate)lysine.

This sequence belongs to the group II decarboxylase family. In terms of assembly, homotetramer. Pyridoxal 5'-phosphate serves as cofactor. In terms of tissue distribution, highly expressed in corolla limbs and at lower levels in corolla tubes and ovaries.

The catalysed reaction is L-phenylalanine + O2 + H2O + H(+) = 2-phenylacetaldehyde + H2O2 + NH4(+) + CO2. In terms of biological role, bifunctional enzyme that catalyzes the decarboxylation of L-phenylalanine to 2-phenylethylamine, which is then oxidized to form 2-phenylacetaldehyde, a constituent of floral scent. 2-phenylacetaldehyde is a precursor of 2-phenylethanol, another constituent of floral scent. The chain is Phenylacetaldehyde synthase from Petunia hybrida (Petunia).